Consider the following 313-residue polypeptide: Protoheme IX farnesyltransferase (313 aa).

8 helical membrane passes run Val34–Val54, Pro56–Leu76, His105–Thr125, Leu128–Leu148, Thr152–Ser172, Ala173–Thr193, Val237–Leu257, and Tyr291–Leu311.

The protein belongs to the UbiA prenyltransferase family. Protoheme IX farnesyltransferase subfamily.

It is found in the cell membrane. The catalysed reaction is heme b + (2E,6E)-farnesyl diphosphate + H2O = Fe(II)-heme o + diphosphate. It functions in the pathway porphyrin-containing compound metabolism; heme O biosynthesis; heme O from protoheme: step 1/1. Functionally, converts heme B (protoheme IX) to heme O by substitution of the vinyl group on carbon 2 of heme B porphyrin ring with a hydroxyethyl farnesyl side group. The chain is Protoheme IX farnesyltransferase from Mycolicibacterium gilvum (strain PYR-GCK) (Mycobacterium gilvum (strain PYR-GCK)).